Consider the following 141-residue polypeptide: MAKKVVAVIKLALQAGKANPAPPVGPALGQHGVNIMMFCKEYNARTQDKAGLVIPVEISVFEDRSFTFITKTPPASVLITKAAGIEKGSGDSAKGSVGSISRAQLEEIAKTKLPDLNCSSVDSAMRIIEGTARNMGVAVSD.

It belongs to the universal ribosomal protein uL11 family. As to quaternary structure, part of the ribosomal stalk of the 50S ribosomal subunit. Interacts with L10 and the large rRNA to form the base of the stalk. L10 forms an elongated spine to which L12 dimers bind in a sequential fashion forming a multimeric L10(L12)X complex. Post-translationally, one or more lysine residues are methylated.

Functionally, forms part of the ribosomal stalk which helps the ribosome interact with GTP-bound translation factors. In Synechococcus sp. (strain CC9902), this protein is Large ribosomal subunit protein uL11.